The primary structure comprises 711 residues: Protein Smaug homolog 1 (711 aa).

Residue serine 168 is modified to Phosphoserine. A disordered region spans residues 278 to 323; it reads ARGPQCLPSDHAPLSPQSSVASSGSGGSEHLEDQTTARNTFQEEGS. One can recognise an SAM domain in the interval 323–396; the sequence is SGMKDVPAWL…LKSLERDIIE (74 aa). A Phosphoserine modification is found at serine 420. Disordered regions lie at residues 422–448 and 565–588; these read STTP…SAAA and NRGF…GRRN. Threonine 424 carries the phosphothreonine modification. Position 566 is an omega-N-methylarginine (arginine 566). Over residues 568-581 the composition is skewed to polar residues; sequence FGQSNSLPTASSVG. Serine 573 bears the Phosphoserine mark.

The protein belongs to the SMAUG family. As to expression, expressed in brain (at protein level).

Its subcellular location is the cytoplasm. The protein localises to the cell projection. The protein resides in the dendrite. It is found in the synapse. It localises to the synaptosome. Acts as a translational repressor of SRE-containing messengers. In Mus musculus (Mouse), this protein is Protein Smaug homolog 1 (Samd4a).